Reading from the N-terminus, the 268-residue chain is UPF0328 protein ECU09_2030 (268 aa).

This sequence belongs to the UPF0328 family.

This is UPF0328 protein ECU09_2030 from Encephalitozoon cuniculi (strain GB-M1) (Microsporidian parasite).